Here is a 649-residue protein sequence, read N- to C-terminus: Transcription factor E2-alpha (649 aa).

Disordered regions lie at residues 34 to 107, 127 to 206, 222 to 267, 291 to 325, and 339 to 382; these read GKGR…SERS, LPGE…SAKT, LHPS…GLQQ, SAAP…SSSG, and DHSS…DGGL. Composition is skewed to polar residues over residues 56 to 76 and 85 to 94; these read SSGS…SRTY and SHNSLPSSTF. Over residues 127–143 the composition is skewed to low complexity; it reads LPGELGLSSPGPLSPSG. Residues S135 and S140 each carry the phosphoserine modification. Over residues 145 to 156 the composition is skewed to polar residues; that stretch reads KSGSQYYPSYPS. The short motif at 171–177 is the Nuclear localization signal element; sequence SKKVRKV. Low complexity-rich tracts occupy residues 182–193 and 242–259; these read PSSVYPSSSGDS and GDGS…SVGS. Positions 339-352 are enriched in low complexity; that stretch reads DHSSNNFSPSPSTP. At T351 the chain carries Phosphothreonine. S355 carries the phosphoserine modification. R367 bears the Omega-N-methylarginine mark. Residue S375 is modified to Phosphoserine. Positions 385-420 are leucine-zipper; it reads LSKMEDRLDEAIHVLRSHAVGTASDLHGLLPGHGAL. Positions 431–547 are disordered; that stretch reads GGRHAGLVGG…KAEREKERRV (117 aa). The span at 448–469 shows a compositional bias: polar residues; it reads TSGTSLLHTHASLPSQASSLPD. A Glycyl lysine isopeptide (Lys-Gly) (interchain with G-Cter in SUMO2) cross-link involves residue K494. Residue S524 is modified to Phosphoserine. The residue at position 529 (E529) is a Phosphothreonine. Residues 537-547 show a composition bias toward basic and acidic residues; that stretch reads QKAEREKERRV. The bHLH domain maps to 544-597; sequence ERRVANNARERLRVRDINEAFKELGRMCQLHLSSEKPQTKLLILHQAVAVILSL. K620 is covalently cross-linked (Glycyl lysine isopeptide (Lys-Gly) (interchain with G-Cter in SUMO2)).

Homodimer. Heterodimer; efficient DNA binding requires dimerization with another bHLH protein. Forms a heterodimer with TWIST1 and TWIST2. Forms a heterodimer with NEUROD1; the heterodimer is inhibited in presence of ID2, but not NR0B2, to E-box element. Forms a heterodimer with TCF15; the heterodimer binds E-box element. Forms a heterodimer with MYOG; heterodimerization enhances MYOG DNA-binding and transcriptional activities. Forms a heterodimer with ATOH8; repress transcription of TCF3 and TCF3-NEUROG3 dimer-induced transactivation of E box-dependent promoters. Component of a nuclear TAL-1 complex composed at least of CBFA2T3, LDB1, TAL1 and TCF3. Interacts with NEUROD2. Interacts with EP300. Interacts with PTF1A, TGFB1I1 and UBE2I. Interacts with BHLHA9. Interacts with ASB2; the interaction is mediated by SKP2 and targets TCF3 for Notch-induced proteasomal degradation. Interacts with transcription factor ASCL5/AmeloD. In terms of assembly, interacts with RALGAPA1. Interacts with FIGLA. As to quaternary structure, forms a heterodimer with ATOH7; required for ATOH7 DNA-binding. In terms of processing, phosphorylated following NGF stimulation. Undergoes Notch-induced ubiquitination and subsequent proteasomal degradation which is mediated by ASB1 or ASB2, the substrate-recognition components of probable ECS E3 ubiquitin-protein ligase complexes.

Its subcellular location is the nucleus. Its function is as follows. Transcriptional regulator. Involved in the initiation of neuronal differentiation and mesenchymal to epithelial transition. Heterodimers between TCF3 and tissue-specific basic helix-loop-helix (bHLH) proteins play major roles in determining tissue-specific cell fate during embryogenesis, like muscle or early B-cell differentiation. Together with TCF15, required for the mesenchymal to epithelial transition. Dimers bind DNA on E-box motifs: 5'-CANNTG-3'. Binds to the kappa-E2 site in the kappa immunoglobulin gene enhancer. Binds to IEB1 and IEB2, which are short DNA sequences in the insulin gene transcription control region. Facilitates ATOH7 binding to DNA at the consensus sequence 5'-CAGGTG-3', and positively regulates transcriptional activity. The protein is Transcription factor E2-alpha (TCF3) of Mesocricetus auratus (Golden hamster).